We begin with the raw amino-acid sequence, 226 residues long: 7-cyano-7-deazaguanine synthase (226 aa).

10-20 (FSGGQDSTTLA) provides a ligand contact to ATP. The Zn(2+) site is built by cysteine 190, cysteine 205, cysteine 208, and cysteine 211.

It belongs to the QueC family. Zn(2+) is required as a cofactor.

It catalyses the reaction 7-carboxy-7-deazaguanine + NH4(+) + ATP = 7-cyano-7-deazaguanine + ADP + phosphate + H2O + H(+). The protein operates within purine metabolism; 7-cyano-7-deazaguanine biosynthesis. In terms of biological role, catalyzes the ATP-dependent conversion of 7-carboxy-7-deazaguanine (CDG) to 7-cyano-7-deazaguanine (preQ(0)). The sequence is that of 7-cyano-7-deazaguanine synthase from Helicobacter pylori (strain ATCC 700392 / 26695) (Campylobacter pylori).